Consider the following 402-residue polypeptide: Tol-Pal system protein TolB (402 aa).

Residues 1-17 form the signal peptide; it reads MKKIVAIFLVFLGSLWA.

It belongs to the TolB family. In terms of assembly, the Tol-Pal system is composed of five core proteins: the inner membrane proteins TolA, TolQ and TolR, the periplasmic protein TolB and the outer membrane protein Pal. They form a network linking the inner and outer membranes and the peptidoglycan layer.

It localises to the periplasm. Its function is as follows. Part of the Tol-Pal system, which plays a role in outer membrane invagination during cell division and is important for maintaining outer membrane integrity. This chain is Tol-Pal system protein TolB, found in Campylobacter jejuni (strain RM1221).